The chain runs to 106 residues: Large ribosomal subunit protein bL21 (106 aa).

The protein belongs to the bacterial ribosomal protein bL21 family. As to quaternary structure, part of the 50S ribosomal subunit. Contacts protein L20.

Functionally, this protein binds to 23S rRNA in the presence of protein L20. This chain is Large ribosomal subunit protein bL21, found in Xanthomonas euvesicatoria pv. vesicatoria (strain 85-10) (Xanthomonas campestris pv. vesicatoria).